Reading from the N-terminus, the 467-residue chain is 3-isopropylmalate dehydratase large subunit (467 aa).

3 residues coordinate [4Fe-4S] cluster: C347, C407, and C410.

Belongs to the aconitase/IPM isomerase family. LeuC type 1 subfamily. Heterodimer of LeuC and LeuD. The cofactor is [4Fe-4S] cluster.

It catalyses the reaction (2R,3S)-3-isopropylmalate = (2S)-2-isopropylmalate. The protein operates within amino-acid biosynthesis; L-leucine biosynthesis; L-leucine from 3-methyl-2-oxobutanoate: step 2/4. Functionally, catalyzes the isomerization between 2-isopropylmalate and 3-isopropylmalate, via the formation of 2-isopropylmaleate. This Prochlorococcus marinus (strain MIT 9301) protein is 3-isopropylmalate dehydratase large subunit.